A 286-amino-acid chain; its full sequence is Master replication protein (286 aa).

In terms of domain architecture, CRESS-DNA virus Rep endonuclease spans 2–96 (ARQVICWCFT…LEGPWEYGEF (95 aa)). The short motif at 9-12 (CFTL) is the RCR-1 element. E33 and H41 together coordinate a divalent metal cation. An RCR-2 motif is present at residues 41 to 43 (HFQ). The short motif at 50–70 (KRTSLAGMKKLIPGAHFEKRR) is the Nuclear localization signal element. The active-site For DNA cleavage activity is Y79. Positions 79 to 82 (YSMK) match the RCR-3 motif. An a divalent metal cation-binding site is contributed by D84. The short motif at 96 to 102 (FVPTIED) is the Nuclear localization signal element. 186 to 188 (GKT) is a binding site for ATP.

Belongs to the nanoviridea/circoviridae replication-associated protein family. In terms of assembly, homooligomer (Potential). Rep binds to repeated DNA motifs (iterons). The cofactor is Mg(2+). Mn(2+) is required as a cofactor.

The protein resides in the host nucleus. It carries out the reaction ATP + H2O = ADP + phosphate + H(+). Its function is as follows. Essential for the replication of all genomic viral ssDNA (trans-replication). The closed circular ssDNA genome is first converted to a superhelical dsDNA. Rep binds a specific hairpin at the genome origin of replication. Introduces an endonucleolytic nick within the conserved sequence 5'-A[GT]TATTAC-3' in the intergenic region of the genome, thereby initiating the rolling circle replication (RCR). Following cleavage, binds covalently to the 5'-phosphate of DNA as a tyrosyl ester. The cleavage gives rise to a free 3'-OH that serves as a primer for the cellular DNA polymerase. The polymerase synthesizes the (+) strand DNA by rolling circle mechanism. After one round of replication, a Rep-catalyzed nucleotidyl transfer reaction releases a circular single-stranded virus genome, thereby terminating the replication. Displays origin-specific DNA cleavage, nucleotidyl transferase, ATPase and helicase activities. The chain is Master replication protein (DNA-R) from Cicer arietinum (Chickpea).